We begin with the raw amino-acid sequence, 455 residues long: Exodeoxyribonuclease 7 large subunit (455 aa).

It belongs to the XseA family. In terms of assembly, heterooligomer composed of large and small subunits.

It is found in the cytoplasm. The catalysed reaction is Exonucleolytic cleavage in either 5'- to 3'- or 3'- to 5'-direction to yield nucleoside 5'-phosphates.. Its function is as follows. Bidirectionally degrades single-stranded DNA into large acid-insoluble oligonucleotides, which are then degraded further into small acid-soluble oligonucleotides. The chain is Exodeoxyribonuclease 7 large subunit from Lactobacillus acidophilus (strain ATCC 700396 / NCK56 / N2 / NCFM).